The primary structure comprises 302 residues: Rhomboid-related protein 2 (302 aa).

Positions 1–38 are disordered; the sequence is MAVAHEMEMESVNLNMEREGKEEPEEEKMKGNGEGKDF. A compositionally biased stretch (basic and acidic residues) spans 16 to 38; sequence MEREGKEEPEEEKMKGNGEGKDF. A run of 7 helical transmembrane segments spans residues 71–91, 127–147, 158–178, 182–202, 211–231, 244–264, and 277–297; these read PLFI…YAVW, LVHA…VLGI, VGLV…IFDP, LVGA…NVIV, FGIV…GFAL, VSFA…YTVF, and FWIA…FNIF. Ser-186 acts as the Nucleophile in catalysis. The active site involves His-249.

The protein belongs to the peptidase S54 family. In terms of processing, proteolytic processing of the proenzyme produces an N- and a C-terminal fragment. The processing is required for activation of the protease.

Its subcellular location is the cell membrane. It catalyses the reaction Cleaves type-1 transmembrane domains using a catalytic dyad composed of serine and histidine that are contributed by different transmembrane domains.. Involved in regulated intramembrane proteolysis and the subsequent release of functional polypeptides from their membrane anchors. Known substrate: EFNB3. In Mus musculus (Mouse), this protein is Rhomboid-related protein 2 (Rhbdl2).